A 252-amino-acid chain; its full sequence is Imidazole glycerol phosphate synthase subunit HisF (252 aa).

Catalysis depends on residues aspartate 11 and aspartate 130.

This sequence belongs to the HisA/HisF family. As to quaternary structure, heterodimer of HisH and HisF.

The protein resides in the cytoplasm. The catalysed reaction is 5-[(5-phospho-1-deoxy-D-ribulos-1-ylimino)methylamino]-1-(5-phospho-beta-D-ribosyl)imidazole-4-carboxamide + L-glutamine = D-erythro-1-(imidazol-4-yl)glycerol 3-phosphate + 5-amino-1-(5-phospho-beta-D-ribosyl)imidazole-4-carboxamide + L-glutamate + H(+). The protein operates within amino-acid biosynthesis; L-histidine biosynthesis; L-histidine from 5-phospho-alpha-D-ribose 1-diphosphate: step 5/9. In terms of biological role, IGPS catalyzes the conversion of PRFAR and glutamine to IGP, AICAR and glutamate. The HisF subunit catalyzes the cyclization activity that produces IGP and AICAR from PRFAR using the ammonia provided by the HisH subunit. The protein is Imidazole glycerol phosphate synthase subunit HisF of Bacillus thuringiensis (strain Al Hakam).